Reading from the N-terminus, the 534-residue chain is Cytochrome P450 monooxygenase CYP4 (534 aa).

The helical transmembrane segment at 46–66 (TIIFCVLMSLVGYIVSRIIWG) threads the bilayer. N-linked (GlcNAc...) asparagine glycosylation is present at Asn220. Heme is bound at residue Cys477. N-linked (GlcNAc...) asparagine glycosylation occurs at Asn515.

The protein belongs to the cytochrome P450 family. Requires heme as cofactor.

It localises to the membrane. Its pathway is secondary metabolite biosynthesis. Its function is as follows. Cytochrome P450 monooxygenase; part of the gene cluster that mediates the biosynthesis of a tyrosine-derived cytochalasan acting as a fungal signal recognized by resistant rice plants and leads to avirulence in Pi33 resistant rice cultivars. The first step in the pathway is catalyzed by the hybrid PKS-NRPS ACE1, assisted by the enoyl reductase RAP1, that are responsible for fusion of the tyrosine precursor and the polyketide backbone. The polyketide synthase module (PKS) of ACE1 is responsible for the synthesis of the polyketide backbone and the downstream nonribosomal peptide synthetase (NRPS) amidates the carboxyl end of the polyketide with the tyrosine precursor. Because ACE1 lacks a designated enoylreductase (ER) domain, the required activity is provided the enoyl reductase RAP1. Reduction by the hydrolyase ORFZ, followed by dehydration and intra-molecular Diels-Alder cyclization by the Diels-Alderase ORF3 then yield the required isoindolone-fused macrocycle. A number of oxidative steps catalyzed by the tailoring enzymes identified within the cluster, including cytochrome P450 monooxygenases CYP1 to CYP4, the FAD-linked oxidoreductase OXR2 and the short-chain dehydrogenase/reductase OXR1, are further required to afford the final cytochalasans that confer avirulence and which have still to be identified. The monooxygenase CYP1 has been shown to be a site-selective C-18 hydroxylase whereas the function of CYP3 is the site-selective epoxidation of the C-6/C-7 olefin that is present in some intermediate compounds. Finally, SYN2 and RAP2 are not required for avirulence in Pi33 resistant rice cultivars. This Pyricularia oryzae (strain 70-15 / ATCC MYA-4617 / FGSC 8958) (Rice blast fungus) protein is Cytochrome P450 monooxygenase CYP4.